A 277-amino-acid polypeptide reads, in one-letter code: Proteasome subunit beta type-7 (277 aa).

Residues 1–43 (MAAVSVYAPPVGGFSFDNCRRNAVLEADFAKRGYKLPKVRKTG) constitute a propeptide, removed in mature form. T44 (nucleophile) is an active-site residue.

The protein belongs to the peptidase T1B family. In terms of assembly, the 26S proteasome consists of a 20S proteasome core and two 19S regulatory subunits. The 20S proteasome core is a barrel-shaped complex made of 28 subunits that are arranged in four stacked rings. The two outer rings are each formed by seven alpha subunits, and the two inner rings are formed by seven beta subunits. The proteolytic activity is exerted by three beta-subunits PSMB5, PSMB6 and PSMB7. As to quaternary structure, (Microbial infection) Interacts with HIV-1 Tat protein. Expressed at a low level in colonic mucosa. Up-regulated in colorectal cancer tissues.

The protein resides in the cytoplasm. Its subcellular location is the nucleus. The catalysed reaction is Cleavage of peptide bonds with very broad specificity.. Component of the 20S core proteasome complex involved in the proteolytic degradation of most intracellular proteins. This complex plays numerous essential roles within the cell by associating with different regulatory particles. Associated with two 19S regulatory particles, forms the 26S proteasome and thus participates in the ATP-dependent degradation of ubiquitinated proteins. The 26S proteasome plays a key role in the maintenance of protein homeostasis by removing misfolded or damaged proteins that could impair cellular functions, and by removing proteins whose functions are no longer required. Associated with the PA200 or PA28, the 20S proteasome mediates ubiquitin-independent protein degradation. This type of proteolysis is required in several pathways including spermatogenesis (20S-PA200 complex) or generation of a subset of MHC class I-presented antigenic peptides (20S-PA28 complex). Within the 20S core complex, PSMB7 displays a trypsin-like activity. This chain is Proteasome subunit beta type-7, found in Homo sapiens (Human).